The primary structure comprises 601 residues: RNA-binding protein MEX3B (601 aa).

Disordered stretches follow at residues 1 to 39 (MPSS…DDQR) and 90 to 109 (GRQG…ISPT). Residue serine 4 is modified to Phosphoserine. Over residues 13–33 (GSGGGGGGGGGGGGGGSGGGE) the composition is skewed to gly residues. KH domains follow at residues 98-159 (DGDR…RREI) and 192-253 (QTTI…REEI). 2 disordered regions span residues 284 to 332 (LHHG…TDSY) and 344 to 448 (TSRL…GGAS). Residue serine 320 is modified to Phosphoserine. 2 stretches are compositionally biased toward low complexity: residues 320-331 (SSSSLGSASTDS) and 362-371 (NGNNNNNGNG). Positions 395–404 (DPAPAPPPGT) are enriched in pro residues. Over residues 420–442 (AAPVSSSCSSSASSSASSSSVVF) the composition is skewed to low complexity. Serine 494 carries the phosphoserine modification. Residues 514 to 546 (LPGLPSSDTSGSSSSSSSSSSSSSSSSGLRRKG) form a disordered region. A compositionally biased stretch (low complexity) spans 519–540 (SSDTSGSSSSSSSSSSSSSSSS). The segment at 550–590 (CSVCFESEVIAALVPCGHNLFCMECANRICEKSEPECPVCH) adopts an RING-type zinc-finger fold.

In terms of processing, phosphorylation at Ser-494 creates a docking site for 14-3-3, which stabilizes the protein and modulates its ability to bind RNA.

It is found in the cytoplasm. The protein localises to the nucleus. The protein resides in the P-body. It localises to the cytoplasmic granule. RNA-binding protein. May be involved in post-transcriptional regulatory mechanisms. The sequence is that of RNA-binding protein MEX3B (Mex3b) from Mus musculus (Mouse).